The primary structure comprises 861 residues: Nuclear pore complex protein NUP93A (861 aa).

Belongs to the nucleoporin interacting component (NIC) family. As to quaternary structure, part of the nuclear pore complex (NPC). The NPC has an eight-fold symmetrical structure comprising a central transport channel and two rings, the cytoplasmic and nuclear rings, to which eight filaments are attached. The cytoplasmic filaments have loose ends, while the nuclear filaments are joined in a distal ring, forming a nuclear basket. NPCs are highly dynamic in configuration and composition, and can be devided in 3 subcomplexes, the NUP62 subcomplex, the NUP107-160 subcomplex and the NUP93 subcomplex, containing approximately 30 different nucleoporin proteins.

The protein localises to the nucleus envelope. It localises to the nucleus. Its subcellular location is the nuclear pore complex. The sequence is that of Nuclear pore complex protein NUP93A from Arabidopsis thaliana (Mouse-ear cress).